Consider the following 233-residue polypeptide: Lectin (233 aa).

Residues asparagine 26 and asparagine 108 are each glycosylated (N-linked (GlcNAc...) asparagine). Mn(2+)-binding residues include glutamate 118 and aspartate 120. Residues aspartate 120, tryptophan 122, asparagine 124, and glutamate 129 each contribute to the Ca(2+) site. Mn(2+) contacts are provided by glutamate 129 and histidine 134.

Belongs to the leguminous lectin family. As to quaternary structure, monomer.

It localises to the secreted. In terms of biological role, has metal-independent hemagglutinating activity towards erythrocytes from rabbit and human. Hemagglutinating activity is inhibited by glycoproteins fetuin, asialo-fetuin, thyroglobulin and azocasein but not by free carbohydrates. Inhibits ADP- and epinephrin-induced but not collagen-, fibrinogen, thrombin- or arachidonic acid-induced platelet aggregation in vitro. Has anticoagulant activity in vitro. The chain is Lectin from Bauhinia forficata (Brazilian orchid-tree).